The primary structure comprises 960 residues: Serine/threonine-protein kinase atg1 (960 aa).

The Protein kinase domain occupies 22-327; that stretch reads YTRLDEIGRG…FPEFFSNNVI (306 aa). ATP-binding positions include 28–36 and Lys-51; that span reads IGRGSFATV. The Proton acceptor role is filled by Asp-165. 6 disordered regions span residues 333–467, 503–538, 550–571, 673–694, 789–815, and 926–960; these read GLLA…RAQE, PRLQGGLSRPGQTGAGSRRTTTQGLPTVSPSSPHAN, ARADSTHQRQHSYERRYGQSPT, SASTDPSARPMDTNVEPDSADS, RLPPDHPSHPDNHSISSTAGSSSTADV, and AKRSSAPTPTAGSAGKTPTSNISPVTYATGVTPPR. Polar residues-rich tracts occupy residues 376–388 and 520–536; these read PVTTHPKSGTPPT and RRTTTQGLPTVSPSSPH. Basic and acidic residues predominate over residues 550-566; the sequence is ARADSTHQRQHSYERRY. Over residues 789 to 800 the composition is skewed to basic and acidic residues; that stretch reads RLPPDHPSHPDN. The segment covering 801–815 has biased composition (low complexity); it reads HSISSTAGSSSTADV. Residues 930-951 are compositionally biased toward polar residues; it reads SAPTPTAGSAGKTPTSNISPVT.

It belongs to the protein kinase superfamily. Ser/Thr protein kinase family. APG1/unc-51/ULK1 subfamily. As to quaternary structure, homodimer. Forms a ternary complex with ATG13 and ATG17.

The protein localises to the cytoplasm. It is found in the preautophagosomal structure membrane. It catalyses the reaction L-seryl-[protein] + ATP = O-phospho-L-seryl-[protein] + ADP + H(+). The catalysed reaction is L-threonyl-[protein] + ATP = O-phospho-L-threonyl-[protein] + ADP + H(+). Its function is as follows. Serine/threonine protein kinase involved in the cytoplasm to vacuole transport (Cvt) and found to be essential in autophagy, where it is required for the formation of autophagosomes. Involved in the clearance of protein aggregates which cannot be efficiently cleared by the proteasome. Required for selective autophagic degradation of the nucleus (nucleophagy) as well as for mitophagy which contributes to regulate mitochondrial quantity and quality by eliminating the mitochondria to a basal level to fulfill cellular energy requirements and preventing excess ROS production. Also involved in endoplasmic reticulum-specific autophagic process, in selective removal of ER-associated degradation (ERAD) substrates. Plays a key role in ATG9 and ATG23 cycling through the pre-autophagosomal structure and is necessary to promote ATG18 binding to ATG9 through phosphorylation of ATG9. Catalyzes phosphorylation of ATG4, decreasing the interaction between ATG4 and ATG8 and impairing deconjugation of PE-conjugated forms of ATG8. This is Serine/threonine-protein kinase atg1 from Penicillium rubens (strain ATCC 28089 / DSM 1075 / NRRL 1951 / Wisconsin 54-1255) (Penicillium chrysogenum).